A 359-amino-acid chain; its full sequence is MLYWLNELSDGGDVFNLFRYITFRAGGAFFTALIFGFIFGQPLINALRRKYKDGQPIREVGPAHETKAGTPTMGGLLILAALSLATLLWARLDNPYVWLVLGVTWCFGLIGFADDWAKVSRNSSAGVSGKVRLAIGFVVAFGAALIAAWVHPEELSNQLAMPVFKDVLLNMGWMYVPFVMIVIVGSANAVNLTDGLDGLAIMPVMIAAGTLGVIAYAVGRVDFTDYLDVHYVPGTGELLIFTAGLIGGGLGFLWYNAPPAAVFMGDTGSLALGGALGAIAVCTKHEIVLAIVGGLFVAEAVSVIVQVLYFKATGKRVFLMAPIHHHFEKKGWAEPQVVIRFWIISLILALIGLATLKLR.

Helical transmembrane passes span 27 to 47 (GAFF…INAL), 70 to 90 (TPTM…LLWA), 97 to 117 (VWLV…DDWA), 133 to 153 (LAIG…VHPE), 167 to 187 (VLLN…VGSA), 198 to 218 (GLAI…AYAV), 238 to 258 (LLIF…YNAP), 261 to 281 (AVFM…AIAV), 287 to 307 (IVLA…IVQV), and 336 to 356 (QVVI…LATL).

It belongs to the glycosyltransferase 4 family. MraY subfamily. It depends on Mg(2+) as a cofactor.

It localises to the cell inner membrane. It carries out the reaction UDP-N-acetyl-alpha-D-muramoyl-L-alanyl-gamma-D-glutamyl-meso-2,6-diaminopimeloyl-D-alanyl-D-alanine + di-trans,octa-cis-undecaprenyl phosphate = di-trans,octa-cis-undecaprenyl diphospho-N-acetyl-alpha-D-muramoyl-L-alanyl-D-glutamyl-meso-2,6-diaminopimeloyl-D-alanyl-D-alanine + UMP. It participates in cell wall biogenesis; peptidoglycan biosynthesis. In terms of biological role, catalyzes the initial step of the lipid cycle reactions in the biosynthesis of the cell wall peptidoglycan: transfers peptidoglycan precursor phospho-MurNAc-pentapeptide from UDP-MurNAc-pentapeptide onto the lipid carrier undecaprenyl phosphate, yielding undecaprenyl-pyrophosphoryl-MurNAc-pentapeptide, known as lipid I. This chain is Phospho-N-acetylmuramoyl-pentapeptide-transferase, found in Jannaschia sp. (strain CCS1).